The primary structure comprises 233 residues: tRNA (guanine-N(7)-)-methyltransferase (233 aa).

Glu62, Glu87, Asp116, and Asp138 together coordinate S-adenosyl-L-methionine. Residue Asp138 is part of the active site. Substrate is bound by residues Lys142, Asp174, and Thr212 to Glu215.

Belongs to the class I-like SAM-binding methyltransferase superfamily. TrmB family.

It catalyses the reaction guanosine(46) in tRNA + S-adenosyl-L-methionine = N(7)-methylguanosine(46) in tRNA + S-adenosyl-L-homocysteine. The protein operates within tRNA modification; N(7)-methylguanine-tRNA biosynthesis. Its function is as follows. Catalyzes the formation of N(7)-methylguanine at position 46 (m7G46) in tRNA. The sequence is that of tRNA (guanine-N(7)-)-methyltransferase from Bartonella quintana (strain Toulouse) (Rochalimaea quintana).